Here is an 825-residue protein sequence, read N- to C-terminus: Lon protease (825 aa).

Residues 41–237 form the Lon N-terminal domain; sequence LPIIFIPNTI…KVIQLLLEQK (197 aa). 388–395 is a binding site for ATP; the sequence is GPPGTGKT. The region spanning 625 to 805 is the Lon proteolytic domain; the sequence is SNPPGVVTGL…DEVLYEALGL (181 aa). Catalysis depends on residues Ser-711 and Lys-754.

This sequence belongs to the peptidase S16 family. In terms of assembly, homohexamer. Organized in a ring with a central cavity.

The protein resides in the cytoplasm. It catalyses the reaction Hydrolysis of proteins in presence of ATP.. ATP-dependent serine protease that mediates the selective degradation of mutant and abnormal proteins as well as certain short-lived regulatory proteins. Required for cellular homeostasis and for survival from DNA damage and developmental changes induced by stress. Degrades polypeptides processively to yield small peptide fragments that are 5 to 10 amino acids long. Binds to DNA in a double-stranded, site-specific manner. In Methanosphaera stadtmanae (strain ATCC 43021 / DSM 3091 / JCM 11832 / MCB-3), this protein is Lon protease.